Here is a 555-residue protein sequence, read N- to C-terminus: Transcriptional adapter 2b (555 aa).

Residues 8-63 (FTKYNCTNCQDDIQGIRVHCAECENFDLCLQCFAAGAEIGAHQNNHSYQFMDTGTS) form a ZZ-type zinc finger. Cys13, Cys16, Cys27, Cys30, Cys36, Cys39, His49, and His53 together coordinate Zn(2+). Residues 69 to 121 (RGKGAWTAREEIRLLDAIEQYGFGNWEDISKHIETKSAEDAKEEYVNKFVNGT) enclose the SANT domain. Residues 318–372 (THRSTGPYGHGKTDHTHTSNGSHRPPSSSLHSPQPNLRKVEMSSGGEASSNSIAP) are disordered. The segment covering 339–352 (SHRPPSSSLHSPQP) has biased composition (low complexity). Residues 363–372 (GEASSNSIAP) are compositionally biased toward polar residues.

As to quaternary structure, component of histone acetyltransferase complexes containing Gcn5 and Ada3. In terms of assembly, can heterooligomerize with Isoform A. Component of the Spt-Ada-Gcn5 acetyltransferase (SAGA) complex consisting of Ada1, Ada2b (Isoform B), Ada3, wda, Saf6, Spt3, Spt7, Spt20, Taf9, Taf10b, Taf12, Nipped-A/Tra1, Sf3b3, Sf3b5, not/nonstop, Sgf11, Sgf29, e(y)2, Atxn7 and Gcn5. Taf5 and Taf10, which has partially redundant properties with Taf10b, may also be part of this complex. Interacts (via C-terminus) with Spt3 and Taf12; the interactions are direct. Interacts with Ada3; the interaction is probably direct. May also interact directly with Spt7 and Gcn5. Interacts with p53. Can heterooligomerize with Isoform B. Component of the Chiffon histone acetyltransferase (CHAT) complex consisting of Ada3, Sgf29, Gcn5, chif/chiffon and Ada2b (Isoform A). Interacts (via N-terminus) with Gcn5 and Ada3; the interaction is direct. Can interact directly with Spt7 in vitro but in vivo this interaction is not stable probably due to the absence of other SAGA components. Interacts with p53. In terms of tissue distribution, expressed in nurse cells of stage 10 egg chambers and transcripts are dumped into the oocyte when nurse cells degenerate at late oogenesis.

The protein localises to the nucleus. Functionally, component of several Gcn5-containing histone acetyltransferase complexes that regulate nucleosome organization; involved in acetylation of histone H3, particularly on Lys-10 (H3K9ac) and Lys-15 (H3K14ac). Regulates the transcription of a subset of genes during development; affects recruitment of RNA polymerase II. May be involved in the function of some acidic activation domains, which activate transcription at distant sites. Involved in the p53-dependent apoptosis pathway response to DNA damage by genotoxic agents. Its function is as follows. Component of the SAGA histone acetyltransferase complex, which predominantly acetylates histone H3. Component of the CHAT histone acetyltransferase complex, which predominantly acetylates histone H3. This Drosophila melanogaster (Fruit fly) protein is Transcriptional adapter 2b.